Consider the following 143-residue polypeptide: Transcription antitermination protein NusB (143 aa).

The protein belongs to the NusB family.

In terms of biological role, involved in transcription antitermination. Required for transcription of ribosomal RNA (rRNA) genes. Binds specifically to the boxA antiterminator sequence of the ribosomal RNA (rrn) operons. This is Transcription antitermination protein NusB from Desulforapulum autotrophicum (strain ATCC 43914 / DSM 3382 / VKM B-1955 / HRM2) (Desulfobacterium autotrophicum).